Reading from the N-terminus, the 280-residue chain is Energy-coupling factor transporter ATP-binding protein EcfA1 (280 aa).

The region spanning 6-241 (LRTENISFQY…SHMLQEIGLD (236 aa)) is the ABC transporter domain. 40–47 (GQNGSGKS) contacts ATP.

It belongs to the ABC transporter superfamily. Energy-coupling factor EcfA family. As to quaternary structure, forms a stable energy-coupling factor (ECF) transporter complex composed of 2 membrane-embedded substrate-binding proteins (S component), 2 ATP-binding proteins (A component) and 2 transmembrane proteins (T component).

Its subcellular location is the cell membrane. Its function is as follows. ATP-binding (A) component of a common energy-coupling factor (ECF) ABC-transporter complex. Unlike classic ABC transporters this ECF transporter provides the energy necessary to transport a number of different substrates. This is Energy-coupling factor transporter ATP-binding protein EcfA1 from Bacillus thuringiensis subsp. konkukian (strain 97-27).